Consider the following 499-residue polypeptide: MASREVSTMIKQGFIADPSLSFSPSRISSPIKLSTASPPLPPPPPPPPNESTLSNPTLFDMMSDEHNRELPRRKSHARVAQILTEFKNGVVYGHSLGPGDVKLTVVGKDGYRVTMDVHRKVLSEKSRFFMEKMNSRREKGVSHMVEISECDDLEIYVETVVLMYSDDLKKKLIGENVIKILALLKVSAAISFDEGVMSCLEHLEAVPWSEDEEETVVTCLEELHLPDDSVTLILQRVSSQPSTSSTRTRTDDIFSKLLTGVLQAKDDKARREMKVLIFKLVREEADYDVSRDTLYGLCHRCLTSLVLCLSEVTTQMNDPGKDRGALMGEIAREADNMLWMVDILIEKKLCSEFVKLWADQKELANLHSKIPTMYRHEISKITAQICVGIGKGRILVNRETRFAVLNTWLEALYDDFGWMRRLSSRSLDRKLVEDGLSQTILTLSLRQQQVILMKWFDRFLSKGDDCPNVQRAFEVWWRRAFIRQVLTEPDEPRLQITLY.

Residues 18 to 30 are compositionally biased toward low complexity; it reads PSLSFSPSRISSP. The disordered stretch occupies residues 18–57; the sequence is PSLSFSPSRISSPIKLSTASPPLPPPPPPPPNESTLSNPT. The segment covering 38-49 has biased composition (pro residues); sequence PPLPPPPPPPPN. One can recognise a BTB domain in the interval 99–172; sequence GDVKLTVVGK…MYSDDLKKKL (74 aa).

The protein operates within protein modification; protein ubiquitination. Functionally, may act as a substrate-specific adapter of an E3 ubiquitin-protein ligase complex (CUL3-RBX1-BTB) which mediates the ubiquitination and subsequent proteasomal degradation of target proteins. The sequence is that of BTB/POZ domain-containing protein At5g60050 from Arabidopsis thaliana (Mouse-ear cress).